Reading from the N-terminus, the 416-residue chain is Prostate tumor-overexpressed gene 1 protein (416 aa).

Positions 1–53 are disordered; sequence MVRPRRAPYRSGAGGPLGGRGRPPRPLVVRAVRSRSWPASPRGPQPPRIRARS. Over residues 12 to 21 the composition is skewed to gly residues; sequence GAGGPLGGRG. Residues 27–36 show a composition bias toward low complexity; that stretch reads LVVRAVRSRS. S53 is modified (phosphoserine). Residues 184–416 form an interaction with FLOT1 region; sequence NGFAGCMLFP…QEQQQRGMGG (233 aa).

Belongs to the Mediator complex subunit 25 family. PTOV1 subfamily. In terms of assembly, may interact with CREBBP. Interacts with FLOT1. Post-translationally, ubiquitinated by the CRL2(KLHDC2) complex, which recognizes the diglycine (Gly-Gly) at the C-terminus, leading to its degradation. Ubiquitinated by the CRL2(APPBP2) complex, which recognizes the Arg-Xaa-Xaa-Gly sequence at the C-terminus, leading to its degradation. In terms of tissue distribution, expressed in brain, heart, kidney, liver, placenta, skeletal muscle and small intestine.

It is found in the cytoplasm. The protein localises to the nucleus. It localises to the cell membrane. The protein resides in the perinuclear region. May activate transcription. Required for nuclear translocation of FLOT1. Promotes cell proliferation. The polypeptide is Prostate tumor-overexpressed gene 1 protein (PTOV1) (Homo sapiens (Human)).